The chain runs to 77 residues: RNA-binding protein Hfq (77 aa).

The 61-residue stretch at 10–70 (DAFLNHVRKT…ISTVMPAQPI (61 aa)) folds into the Sm domain.

Belongs to the Hfq family. Homohexamer.

Functionally, RNA chaperone that binds small regulatory RNA (sRNAs) and mRNAs to facilitate mRNA translational regulation in response to envelope stress, environmental stress and changes in metabolite concentrations. Also binds with high specificity to tRNAs. This chain is RNA-binding protein Hfq, found in Jannaschia sp. (strain CCS1).